Here is a 282-residue protein sequence, read N- to C-terminus: Bis(5'-nucleosyl)-tetraphosphatase, symmetrical (282 aa).

Belongs to the Ap4A hydrolase family.

It catalyses the reaction P(1),P(4)-bis(5'-adenosyl) tetraphosphate + H2O = 2 ADP + 2 H(+). Hydrolyzes diadenosine 5',5'''-P1,P4-tetraphosphate to yield ADP. The sequence is that of Bis(5'-nucleosyl)-tetraphosphatase, symmetrical from Burkholderia pseudomallei (strain 1106a).